The following is a 425-amino-acid chain: 3-phosphoshikimate 1-carboxyvinyltransferase (425 aa).

The 3-phosphoshikimate site is built by Lys-22, Ser-23, and Arg-27. Lys-22 is a phosphoenolpyruvate binding site. Phosphoenolpyruvate is bound by residues Gly-95 and Arg-123. 3-phosphoshikimate is bound by residues Ser-169, Ser-170, Gln-171, Ser-197, Asp-313, Asn-336, and Lys-340. Gln-171 provides a ligand contact to phosphoenolpyruvate. The Proton acceptor role is filled by Asp-313. Phosphoenolpyruvate contacts are provided by Arg-344, Arg-386, and Lys-411.

This sequence belongs to the EPSP synthase family. As to quaternary structure, monomer.

Its subcellular location is the cytoplasm. It catalyses the reaction 3-phosphoshikimate + phosphoenolpyruvate = 5-O-(1-carboxyvinyl)-3-phosphoshikimate + phosphate. Its pathway is metabolic intermediate biosynthesis; chorismate biosynthesis; chorismate from D-erythrose 4-phosphate and phosphoenolpyruvate: step 6/7. Its function is as follows. Catalyzes the transfer of the enolpyruvyl moiety of phosphoenolpyruvate (PEP) to the 5-hydroxyl of shikimate-3-phosphate (S3P) to produce enolpyruvyl shikimate-3-phosphate and inorganic phosphate. The polypeptide is 3-phosphoshikimate 1-carboxyvinyltransferase (Pseudoalteromonas translucida (strain TAC 125)).